The sequence spans 98 residues: Nucleoid-associated protein pc0477 (98 aa).

It belongs to the YbaB/EbfC family. As to quaternary structure, homodimer.

The protein resides in the cytoplasm. It is found in the nucleoid. Functionally, binds to DNA and alters its conformation. May be involved in regulation of gene expression, nucleoid organization and DNA protection. In Protochlamydia amoebophila (strain UWE25), this protein is Nucleoid-associated protein pc0477.